The sequence spans 160 residues: Protein-export protein SecB (160 aa).

It belongs to the SecB family. As to quaternary structure, homotetramer, a dimer of dimers. One homotetramer interacts with 1 SecA dimer.

The protein localises to the cytoplasm. Functionally, one of the proteins required for the normal export of preproteins out of the cell cytoplasm. It is a molecular chaperone that binds to a subset of precursor proteins, maintaining them in a translocation-competent state. It also specifically binds to its receptor SecA. The polypeptide is Protein-export protein SecB (Rhizobium etli (strain ATCC 51251 / DSM 11541 / JCM 21823 / NBRC 15573 / CFN 42)).